The chain runs to 265 residues: Hydroxyethylthiazole kinase 1 (265 aa).

M39 serves as a coordination point for substrate. Residues K115 and T168 each contribute to the ATP site. A substrate-binding site is contributed by G195.

Belongs to the Thz kinase family. Mg(2+) is required as a cofactor.

It carries out the reaction 5-(2-hydroxyethyl)-4-methylthiazole + ATP = 4-methyl-5-(2-phosphooxyethyl)-thiazole + ADP + H(+). Its pathway is cofactor biosynthesis; thiamine diphosphate biosynthesis; 4-methyl-5-(2-phosphoethyl)-thiazole from 5-(2-hydroxyethyl)-4-methylthiazole: step 1/1. In terms of biological role, catalyzes the phosphorylation of the hydroxyl group of 4-methyl-5-beta-hydroxyethylthiazole (THZ). The polypeptide is Hydroxyethylthiazole kinase 1 (Clostridium botulinum (strain Loch Maree / Type A3)).